The sequence spans 302 residues: 4-hydroxy-tetrahydrodipicolinate synthase (302 aa).

T55 provides a ligand contact to pyruvate. Catalysis depends on Y144, which acts as the Proton donor/acceptor. The Schiff-base intermediate with substrate role is filled by K172. V214 is a pyruvate binding site.

This sequence belongs to the DapA family. In terms of assembly, homotetramer; dimer of dimers.

The protein localises to the cytoplasm. It catalyses the reaction L-aspartate 4-semialdehyde + pyruvate = (2S,4S)-4-hydroxy-2,3,4,5-tetrahydrodipicolinate + H2O + H(+). It functions in the pathway amino-acid biosynthesis; L-lysine biosynthesis via DAP pathway; (S)-tetrahydrodipicolinate from L-aspartate: step 3/4. Its function is as follows. Catalyzes the condensation of (S)-aspartate-beta-semialdehyde [(S)-ASA] and pyruvate to 4-hydroxy-tetrahydrodipicolinate (HTPA). In Synechococcus sp. (strain WH7803), this protein is 4-hydroxy-tetrahydrodipicolinate synthase.